We begin with the raw amino-acid sequence, 277 residues long: Phosphatidylglycerol--prolipoprotein diacylglyceryl transferase (277 aa).

A run of 4 helical transmembrane segments spans residues 15 to 35 (IHVR…TFMS), 50 to 70 (IDLL…YYVI), 89 to 109 (GGIA…VFCY), and 112 to 132 (FLPP…AQVL). Arg134 is a binding site for a 1,2-diacyl-sn-glycero-3-phospho-(1'-sn-glycerol). Transmembrane regions (helical) follow at residues 174 to 194 (KPTF…ILSL), 204 to 224 (GEVF…VEGM), and 234 to 254 (VIRV…ILFV).

It belongs to the Lgt family.

Its subcellular location is the cell membrane. The catalysed reaction is L-cysteinyl-[prolipoprotein] + a 1,2-diacyl-sn-glycero-3-phospho-(1'-sn-glycerol) = an S-1,2-diacyl-sn-glyceryl-L-cysteinyl-[prolipoprotein] + sn-glycerol 1-phosphate + H(+). The protein operates within protein modification; lipoprotein biosynthesis (diacylglyceryl transfer). Its function is as follows. Catalyzes the transfer of the diacylglyceryl group from phosphatidylglycerol to the sulfhydryl group of the N-terminal cysteine of a prolipoprotein, the first step in the formation of mature lipoproteins. The sequence is that of Phosphatidylglycerol--prolipoprotein diacylglyceryl transferase from Lactobacillus delbrueckii subsp. bulgaricus (strain ATCC 11842 / DSM 20081 / BCRC 10696 / JCM 1002 / NBRC 13953 / NCIMB 11778 / NCTC 12712 / WDCM 00102 / Lb 14).